An 828-amino-acid chain; its full sequence is Periplasmic nitrate reductase (828 aa).

Residues 1-31 constitute a signal peptide (tat-type signal); sequence MKLSRRGFMKANAVAAAAAAAGLSVPGVARA. In terms of domain architecture, 4Fe-4S Mo/W bis-MGD-type spans 39 to 95; the sequence is IKWDKAPCRFCGTGCGVLVGTQQGRVVACQGDPDAPVNRGLNCIKGYFLPKIMYGED. Residues cysteine 46, cysteine 49, cysteine 53, and cysteine 81 each coordinate [4Fe-4S] cluster. Mo-bis(molybdopterin guanine dinucleotide) contacts are provided by residues lysine 83, glutamine 150, asparagine 175, cysteine 179, 212–219, 243–247, 262–264, methionine 372, glutamine 376, asparagine 482, 508–509, lysine 531, aspartate 558, and 718–727; these read WGANMAEM, STYQH, QSD, SD, and TGRVLEHWHT. Substrate is bound at residue phenylalanine 794. Mo-bis(molybdopterin guanine dinucleotide)-binding residues include asparagine 802 and lysine 819.

Belongs to the prokaryotic molybdopterin-containing oxidoreductase family. NasA/NapA/NarB subfamily. Component of the periplasmic nitrate reductase NapAB complex composed of NapA and NapB. It depends on [4Fe-4S] cluster as a cofactor. Requires Mo-bis(molybdopterin guanine dinucleotide) as cofactor. Predicted to be exported by the Tat system. The position of the signal peptide cleavage has not been experimentally proven.

The protein resides in the periplasm. The enzyme catalyses 2 Fe(II)-[cytochrome] + nitrate + 2 H(+) = 2 Fe(III)-[cytochrome] + nitrite + H2O. Its function is as follows. Catalytic subunit of the periplasmic nitrate reductase complex NapAB. Receives electrons from NapB and catalyzes the reduction of nitrate to nitrite. This chain is Periplasmic nitrate reductase, found in Shigella dysenteriae serotype 1 (strain Sd197).